The primary structure comprises 78 residues: Large ribosomal subunit protein bL28 (78 aa).

The protein belongs to the bacterial ribosomal protein bL28 family.

This is Large ribosomal subunit protein bL28 from Psychrobacter sp. (strain PRwf-1).